The sequence spans 60 residues: UPF0434 protein KPK_3615 (60 aa).

Belongs to the UPF0434 family.

This Klebsiella pneumoniae (strain 342) protein is UPF0434 protein KPK_3615.